The sequence spans 38 residues: Spheniscin-1 (38 aa).

3 disulfide bridges follow: Cys5–Cys33, Cys12–Cys27, and Cys17–Cys34.

As to quaternary structure, monomer. As to expression, secreted into the stomach cavity.

The protein resides in the secreted. Its function is as follows. Has antifungal activity and antibacterial activity against Gram-positive and Gram-negative bacteria. Involved in the process of food preservation in the stomach during the incubation fast. May also be present during infection. In Aptenodytes patagonicus (King penguin), this protein is Spheniscin-1.